The chain runs to 430 residues: Glutamate-1-semialdehyde 2,1-aminomutase (430 aa).

An N6-(pyridoxal phosphate)lysine modification is found at Lys-265.

It belongs to the class-III pyridoxal-phosphate-dependent aminotransferase family. HemL subfamily. Homodimer. Pyridoxal 5'-phosphate serves as cofactor.

The protein localises to the cytoplasm. It catalyses the reaction (S)-4-amino-5-oxopentanoate = 5-aminolevulinate. The protein operates within porphyrin-containing compound metabolism; protoporphyrin-IX biosynthesis; 5-aminolevulinate from L-glutamyl-tRNA(Glu): step 2/2. The chain is Glutamate-1-semialdehyde 2,1-aminomutase from Shewanella sp. (strain MR-7).